The chain runs to 700 residues: Elongation factor G 2 (700 aa).

Residues 8-290 (ERYRNIGISA…AVIDFLPSPV (283 aa)) form the tr-type G domain. GTP is bound by residues 17–24 (AHIDAGKT), 88–92 (DTPGH), and 142–145 (NKMD).

It belongs to the TRAFAC class translation factor GTPase superfamily. Classic translation factor GTPase family. EF-G/EF-2 subfamily.

It localises to the cytoplasm. In terms of biological role, catalyzes the GTP-dependent ribosomal translocation step during translation elongation. During this step, the ribosome changes from the pre-translocational (PRE) to the post-translocational (POST) state as the newly formed A-site-bound peptidyl-tRNA and P-site-bound deacylated tRNA move to the P and E sites, respectively. Catalyzes the coordinated movement of the two tRNA molecules, the mRNA and conformational changes in the ribosome. In Burkholderia orbicola (strain AU 1054), this protein is Elongation factor G 2.